The chain runs to 273 residues: Nucleotide-binding protein TTHA0319 (273 aa).

ATP is bound at residue 8-15 (GLSGAGKT). 57 to 60 (DARA) contributes to the GTP binding site.

The protein belongs to the RapZ-like family.

Its function is as follows. Displays ATPase and GTPase activities. This Thermus thermophilus (strain ATCC 27634 / DSM 579 / HB8) protein is Nucleotide-binding protein TTHA0319.